The following is a 71-amino-acid chain: Exodeoxyribonuclease 7 small subunit (71 aa).

This sequence belongs to the XseB family. Heterooligomer composed of large and small subunits.

It localises to the cytoplasm. The catalysed reaction is Exonucleolytic cleavage in either 5'- to 3'- or 3'- to 5'-direction to yield nucleoside 5'-phosphates.. Functionally, bidirectionally degrades single-stranded DNA into large acid-insoluble oligonucleotides, which are then degraded further into small acid-soluble oligonucleotides. In Streptococcus equi subsp. zooepidemicus (strain H70), this protein is Exodeoxyribonuclease 7 small subunit.